The primary structure comprises 382 residues: D-galactonate dehydratase (382 aa).

Residue Asp-183 coordinates Mg(2+). His-185 functions as the Proton donor in the catalytic mechanism. Residues Glu-209 and Glu-235 each coordinate Mg(2+). His-285 serves as the catalytic Proton acceptor.

It belongs to the mandelate racemase/muconate lactonizing enzyme family. GalD subfamily. It depends on Mg(2+) as a cofactor.

It carries out the reaction D-galactonate = 2-dehydro-3-deoxy-D-galactonate + H2O. The protein operates within carbohydrate acid metabolism; D-galactonate degradation; D-glyceraldehyde 3-phosphate and pyruvate from D-galactonate: step 1/3. In terms of biological role, catalyzes the dehydration of D-galactonate to 2-keto-3-deoxy-D-galactonate. This chain is D-galactonate dehydratase, found in Escherichia coli O9:H4 (strain HS).